A 427-amino-acid polypeptide reads, in one-letter code: Indole diterpene prenyltransferase idtF (427 aa).

Positions 97, 195, 264, 266, 268, and 352 each coordinate substrate.

The protein belongs to the tryptophan dimethylallyltransferase family.

It functions in the pathway secondary metabolite biosynthesis. Its function is as follows. Indole diterpene prenyltransferase; part of the gene cluster that mediates the biosynthesis of paspalitrems, indole-diterpene (IDT) mycotoxins that are potent tremorgens in mammals. The geranylgeranyl diphosphate (GGPP) synthase idtG is proposed to catalyze the first step in IDT biosynthesis via catalysis of a series of iterative condensations of isopentenyl diphosphate (IPP) with dimethylallyl diphosphate (DMAPP), geranyl diphosphate (GPP), and farnesyl diphosphate (FPP), to form GGPP. Condensation of indole-3-glycerol phosphate with GGPP by the prenyltransferase idtC then forms 3-geranylgeranylindole (3-GGI). Epoxidation of the two terminal alkenes of the geranylgeranyl moiety by the FAD-dependent monooxygenase idtM, and cyclization by the terpene cyclase idtB then leads to the production of paspaline. The cytochrome P450 monooxygenase idtP then catalyzes oxidative elimination of the pendant methyl group at C-12 of paspaline and generates the C-10 ketone to yield 13-desoxypaxilline. The cytochrome P450 monooxygenase idtQ may catalyze the C-13 oxidation of 13-desoxypaxilline to afford paxilline. Considering that both paspalicine and paxilline were detected in C.paspali, idtQ also catalyzes the formation of paspalinine from 13-desoxypaxilline via paspalicine as an intermediate. Finally, the alpha-prenyltransferase idtF prenylates paspalinine at the C-20 or the C-21 positions to yield paspalitrems A and C, respectively. The hydroxylation of paspalitrem A at C-32 by a still unknown oxidase affords paspalitrem B. The chain is Indole diterpene prenyltransferase idtF from Claviceps paspali (Rye ergot fungus).